A 664-amino-acid chain; its full sequence is Putative membrane protein Bcell_0381 (664 aa).

Positions 588 to 616 (DVTQDENGEEKSEEDNKEEIVEENTEEDN) are enriched in acidic residues. A disordered region spans residues 588-622 (DVTQDENGEEKSEEDNKEEIVEENTEEDNKEEKTI). Residues 636-656 (YQFLLAGIIMLVGGSCIYVFY) traverse the membrane as a helical segment.

It localises to the cell membrane. The polypeptide is Putative membrane protein Bcell_0381 (Evansella cellulosilytica (strain ATCC 21833 / DSM 2522 / FERM P-1141 / JCM 9156 / N-4) (Bacillus cellulosilyticus)).